The primary structure comprises 677 residues: Methionine--tRNA ligase (677 aa).

Residues 15 to 25 (PYANGSIHLGH) carry the 'HIGH' region motif. 4 residues coordinate Zn(2+): Cys146, Cys149, Cys159, and Cys162. The 'KMSKS' region signature appears at 333–337 (KMSKS). Lys336 serves as a coordination point for ATP. The 103-residue stretch at 575 to 677 (DFAKVDLRVA…AGAKPGHQVK (103 aa)) folds into the tRNA-binding domain.

This sequence belongs to the class-I aminoacyl-tRNA synthetase family. MetG type 1 subfamily. Homodimer. It depends on Zn(2+) as a cofactor.

It is found in the cytoplasm. It catalyses the reaction tRNA(Met) + L-methionine + ATP = L-methionyl-tRNA(Met) + AMP + diphosphate. Its function is as follows. Is required not only for elongation of protein synthesis but also for the initiation of all mRNA translation through initiator tRNA(fMet) aminoacylation. The protein is Methionine--tRNA ligase of Escherichia fergusonii (strain ATCC 35469 / DSM 13698 / CCUG 18766 / IAM 14443 / JCM 21226 / LMG 7866 / NBRC 102419 / NCTC 12128 / CDC 0568-73).